A 400-amino-acid polypeptide reads, in one-letter code: Iron(III) enterobactin esterase (400 aa).

This sequence belongs to the Fes family. As to quaternary structure, monomer.

It is found in the cytoplasm. It carries out the reaction Fe(III)-enterobactin + 3 H2O + H(+) = Fe(III)-[N-(2,3-dihydroxybenzoyl)-L-serine] + 2 N-(2,3-dihydroxybenzoyl)-L-serine. The enzyme catalyses Fe(III)-enterobactin + H2O = Fe(III)-[N-(2,3-dihydroxybenzoyl)-L-serine]3 + H(+). It catalyses the reaction Fe(III)-[N-(2,3-dihydroxybenzoyl)-L-serine]3 + H2O + H(+) = Fe(III)-[N-(2,3-dihydroxybenzoyl)-L-serine]2 + N-(2,3-dihydroxybenzoyl)-L-serine. The catalysed reaction is Fe(III)-[N-(2,3-dihydroxybenzoyl)-L-serine]2 + H2O + H(+) = Fe(III)-[N-(2,3-dihydroxybenzoyl)-L-serine] + N-(2,3-dihydroxybenzoyl)-L-serine. It carries out the reaction enterobactin + 3 H2O = 3 N-(2,3-dihydroxybenzoyl)-L-serine + 2 H(+). Inhibited by N-ethylmaleimide. Its function is as follows. Catalyzes the hydrolysis of ferric enterobactin (Fe-Ent). Is responsible for the release of iron from ferric enterobactin. Also catalyzes the hydrolysis of iron-free enterobactin (Ent). Cleavage of ferric enterobactin results in a mixture of three hydrolysis products, 2,3-dihydroxybenzoylserine (DHBS), the linear dimer (DHBS)2 and the linear trimer (DHBS)3, while cleavage of iron-free enterobactin yields only the monomer. Hydrolysis of ferric enterobactin is less efficient than hydrolysis of unliganded enterobactin. It also cleaves the aluminum (III) complex at a rate similar to the ferric complex. This chain is Iron(III) enterobactin esterase, found in Escherichia coli (strain K12).